Consider the following 305-residue polypeptide: MIKQRTLKRIVQATGVGLHTGKKVTLTMRPAPANTGVIYRRTDLNPPVDFPADAKSVRDTMLCTCLVNEHDVRISTVEHLNAALAGLGIDNIVIDVDAPEIPIMDGSASPFVYLLLDAGIEELNCAKKFVRIKQSVRVEDGDKWAEMKPFNGFSLDFTIDFNHPAIDAGNQRYRLDFSADAFVRQISRARTFGFMRDIEYLQSRGLCLGGSMDCAIVVDDYRVLNEDGLRFEDEFVRHKMLDAIGDLFMCGHNIIGAFSAFKSGHALNNKLLQAVLANQEAWEYVTFEDEAEMPLAFKAPSIVLA.

H79, H238, and D242 together coordinate Zn(2+). H265 (proton donor) is an active-site residue.

Belongs to the LpxC family. Zn(2+) is required as a cofactor.

It carries out the reaction a UDP-3-O-[(3R)-3-hydroxyacyl]-N-acetyl-alpha-D-glucosamine + H2O = a UDP-3-O-[(3R)-3-hydroxyacyl]-alpha-D-glucosamine + acetate. It participates in glycolipid biosynthesis; lipid IV(A) biosynthesis; lipid IV(A) from (3R)-3-hydroxytetradecanoyl-[acyl-carrier-protein] and UDP-N-acetyl-alpha-D-glucosamine: step 2/6. Its function is as follows. Catalyzes the hydrolysis of UDP-3-O-myristoyl-N-acetylglucosamine to form UDP-3-O-myristoylglucosamine and acetate, the committed step in lipid A biosynthesis. The polypeptide is UDP-3-O-acyl-N-acetylglucosamine deacetylase (Pectobacterium atrosepticum (strain SCRI 1043 / ATCC BAA-672) (Erwinia carotovora subsp. atroseptica)).